Reading from the N-terminus, the 76-residue chain is Antimicrobial peptide lumbricin-1 (76 aa).

Residues 1 to 14 (MSLCISDYLYLTLT) constitute a propeptide, removed in mature form.

Displays antimicrobial activity against the Gram-positive bacteria B.subtilis ATCC 62037, S.aureus ATCC 15752 and S.mutans ATCC 25175, the Gram-negative bacteria E.coli ATCC 27325, P.putida ATCC 17426 and Serratia sp. ATCC 21074, and the fungi C.albicans ATCC 10231, C.neoformans ATCC 34881 and S.cerevisiae ATCC 44774. Does not possess hemolytic activity. This chain is Antimicrobial peptide lumbricin-1, found in Lumbricus rubellus (Humus earthworm).